The following is a 450-amino-acid chain: Phosphoglucosamine mutase (450 aa).

S107 serves as the catalytic Phosphoserine intermediate. S107, D246, D248, and D250 together coordinate Mg(2+). S107 is modified (phosphoserine).

The protein belongs to the phosphohexose mutase family. Mg(2+) serves as cofactor. Post-translationally, activated by phosphorylation.

The catalysed reaction is alpha-D-glucosamine 1-phosphate = D-glucosamine 6-phosphate. Functionally, catalyzes the conversion of glucosamine-6-phosphate to glucosamine-1-phosphate. This is Phosphoglucosamine mutase from Aromatoleum aromaticum (strain DSM 19018 / LMG 30748 / EbN1) (Azoarcus sp. (strain EbN1)).